We begin with the raw amino-acid sequence, 294 residues long: tRNA dimethylallyltransferase (294 aa).

Residue 10 to 17 (GPTAVGKT) participates in ATP binding. 12–17 (TAVGKT) lines the substrate pocket. The segment at 35 to 38 (DSQQ) is interaction with substrate tRNA.

The protein belongs to the IPP transferase family. Monomer. Mg(2+) serves as cofactor.

The enzyme catalyses adenosine(37) in tRNA + dimethylallyl diphosphate = N(6)-dimethylallyladenosine(37) in tRNA + diphosphate. Functionally, catalyzes the transfer of a dimethylallyl group onto the adenine at position 37 in tRNAs that read codons beginning with uridine, leading to the formation of N6-(dimethylallyl)adenosine (i(6)A). This Streptococcus pneumoniae (strain Taiwan19F-14) protein is tRNA dimethylallyltransferase.